The sequence spans 275 residues: Digeranylgeranylglyceryl phosphate synthase (275 aa).

Helical transmembrane passes span 12–32 (VHNV…ATTW), 35–55 (TPLF…GYVI), 88–108 (IVLF…PFGF), 125–145 (KLGL…AYYG), 146–166 (GLAS…IFFF), 200–220 (WIIA…PYFL), 224–244 (VIYL…LILH), and 255–275 (SLMK…SLRI).

The protein belongs to the UbiA prenyltransferase family. DGGGP synthase subfamily. Mg(2+) serves as cofactor.

It is found in the cell membrane. It carries out the reaction sn-3-O-(geranylgeranyl)glycerol 1-phosphate + (2E,6E,10E)-geranylgeranyl diphosphate = 2,3-bis-O-(geranylgeranyl)-sn-glycerol 1-phosphate + diphosphate. The protein operates within membrane lipid metabolism; glycerophospholipid metabolism. In terms of biological role, prenyltransferase that catalyzes the transfer of the geranylgeranyl moiety of geranylgeranyl diphosphate (GGPP) to the C2 hydroxyl of (S)-3-O-geranylgeranylglyceryl phosphate (GGGP). This reaction is the second ether-bond-formation step in the biosynthesis of archaeal membrane lipids. The protein is Digeranylgeranylglyceryl phosphate synthase of Sulfolobus acidocaldarius (strain ATCC 33909 / DSM 639 / JCM 8929 / NBRC 15157 / NCIMB 11770).